A 508-amino-acid chain; its full sequence is Maturase K (508 aa).

The protein belongs to the intron maturase 2 family. MatK subfamily.

The protein resides in the plastid. Its subcellular location is the chloroplast. Usually encoded in the trnK tRNA gene intron. Probably assists in splicing its own and other chloroplast group II introns. This is Maturase K from Abies bracteata (Bristle-cone fir).